The chain runs to 482 residues: MKFIIKLFPEITIKSQSVRLRFIKILTGNIRNVLKHYDETLAVVRHWDNIEVRAKDENQRLAIRDALTRIPGIHHILEVEDVPFTDMHDIFEKALVQYRDQLEGKTFCVRVKRRGKHDFSSIDVERYVGGGLNQHIESARVKLTNPEVTVHLEVEDDRLLLIKGRYEGIGGFPIGTQEDVLSLISGGFDSGVSSYMLMRRGCRVHYCFFNLGGAAHEIGVRQVAHYLWNRFGSSHRVRFVAINFEPVVGEILEKIDDGQMGVILKRMMVRAASKVAERYGVQALVTGEALGQVSSQTLTNLRLIDNVSDTLILRPLISYDKEHIINLARQIGTEDFARTMPEYCGVISKSPTVKAVKSKIEAEEEKFDFSILDKVVEEANNVDIREIALQTEQEVVEVETVNGFGPNDVILDIRSIDEQEDKPLKVEGIDVVSLPFYKLSTKFGDLDQNRTWLLWCERGVMSRLQALYLREQGFNNVKVYRP.

One can recognise a THUMP domain in the interval 61-165 (LAIRDALTRI…DDRLLLIKGR (105 aa)). ATP is bound by residues 183-184 (LI), Lys265, Gly287, and Gln296. Cys344 and Cys456 are joined by a disulfide. Positions 404-482 (FGPNDVILDI…GFNNVKVYRP (79 aa)) constitute a Rhodanese domain. Cys456 serves as the catalytic Cysteine persulfide intermediate.

Belongs to the ThiI family.

It localises to the cytoplasm. It carries out the reaction [ThiI sulfur-carrier protein]-S-sulfanyl-L-cysteine + a uridine in tRNA + 2 reduced [2Fe-2S]-[ferredoxin] + ATP + H(+) = [ThiI sulfur-carrier protein]-L-cysteine + a 4-thiouridine in tRNA + 2 oxidized [2Fe-2S]-[ferredoxin] + AMP + diphosphate. The enzyme catalyses [ThiS sulfur-carrier protein]-C-terminal Gly-Gly-AMP + S-sulfanyl-L-cysteinyl-[cysteine desulfurase] + AH2 = [ThiS sulfur-carrier protein]-C-terminal-Gly-aminoethanethioate + L-cysteinyl-[cysteine desulfurase] + A + AMP + 2 H(+). It functions in the pathway cofactor biosynthesis; thiamine diphosphate biosynthesis. Functionally, catalyzes the ATP-dependent transfer of a sulfur to tRNA to produce 4-thiouridine in position 8 of tRNAs, which functions as a near-UV photosensor. Also catalyzes the transfer of sulfur to the sulfur carrier protein ThiS, forming ThiS-thiocarboxylate. This is a step in the synthesis of thiazole, in the thiamine biosynthesis pathway. The sulfur is donated as persulfide by IscS. The chain is tRNA sulfurtransferase from Shigella boydii serotype 4 (strain Sb227).